The sequence spans 258 residues: Peptidase inhibitor 15 (258 aa).

Positions 1–21 (MTIIAAISCVFLFSILCETSA) are cleaved as a signal peptide. The propeptide occupies 22 to 60 (LVLPNSTDLLLSNNNFTDIETALAAHLDSAKIPKARRKR). N-linked (GlcNAc...) asparagine glycans are attached at residues asparagine 26, asparagine 36, and asparagine 124. In terms of domain architecture, SCP spans 71–211 (LDYHNQVRGK…RRAVYLVCNY (141 aa)).

This sequence belongs to the CRISP family.

Its subcellular location is the secreted. Functionally, serine protease inhibitor which displays weak inhibitory activity against trypsin. May play a role in facial patterning during embryonic development. The protein is Peptidase inhibitor 15 (PI15) of Gallus gallus (Chicken).